The primary structure comprises 193 residues: Acyl carrier protein phosphodiesterase (193 aa).

It belongs to the AcpH family.

The catalysed reaction is holo-[ACP] + H2O = apo-[ACP] + (R)-4'-phosphopantetheine + H(+). Converts holo-ACP to apo-ACP by hydrolytic cleavage of the phosphopantetheine prosthetic group from ACP. The sequence is that of Acyl carrier protein phosphodiesterase from Escherichia coli O7:K1 (strain IAI39 / ExPEC).